We begin with the raw amino-acid sequence, 166 residues long: uncharacterized protein (166 aa).

Over residues 73 to 88 (SKLNNNNNSNNNNKMA) the composition is skewed to low complexity. Disordered regions lie at residues 73 to 101 (SKLNNNNNSNNNNKMAVDNKDNKDNEKDK) and 126 to 166 (PQSS…EFNN). The segment covering 89–101 (VDNKDNKDNEKDK) has biased composition (basic and acidic residues). A compositionally biased stretch (low complexity) spans 134–154 (SPTHKSPSSSPKTISPVKVSP). The segment covering 155–166 (TSSPIKNPEFNN) has biased composition (polar residues).

This is an uncharacterized protein from Dictyostelium discoideum (Social amoeba).